The primary structure comprises 455 residues: Phosphoglucosamine mutase (455 aa).

The active-site Phosphoserine intermediate is S104. Mg(2+) contacts are provided by S104, D253, D255, and D257. S104 is subject to Phosphoserine.

It belongs to the phosphohexose mutase family. Mg(2+) is required as a cofactor. Activated by phosphorylation.

It carries out the reaction alpha-D-glucosamine 1-phosphate = D-glucosamine 6-phosphate. Functionally, catalyzes the conversion of glucosamine-6-phosphate to glucosamine-1-phosphate. The sequence is that of Phosphoglucosamine mutase from Psychrobacter cryohalolentis (strain ATCC BAA-1226 / DSM 17306 / VKM B-2378 / K5).